A 359-amino-acid polypeptide reads, in one-letter code: DNA replication and repair protein RecF (359 aa).

30 to 37 (GPNGSGKT) contributes to the ATP binding site.

The protein belongs to the RecF family.

It is found in the cytoplasm. In terms of biological role, the RecF protein is involved in DNA metabolism; it is required for DNA replication and normal SOS inducibility. RecF binds preferentially to single-stranded, linear DNA. It also seems to bind ATP. This Aliivibrio fischeri (strain ATCC 700601 / ES114) (Vibrio fischeri) protein is DNA replication and repair protein RecF.